A 571-amino-acid chain; its full sequence is Glutamate--tRNA ligase (571 aa).

Positions 38-48 match the 'HIGH' region motif; the sequence is PSPTGFMHIGG. The 'KMSKS' region signature appears at 316-320; it reads KLSKR. An ATP-binding site is contributed by Lys-319.

This sequence belongs to the class-I aminoacyl-tRNA synthetase family. Glutamate--tRNA ligase type 1 subfamily. Monomer.

The protein resides in the cytoplasm. It catalyses the reaction tRNA(Glu) + L-glutamate + ATP = L-glutamyl-tRNA(Glu) + AMP + diphosphate. In terms of biological role, catalyzes the attachment of glutamate to tRNA(Glu) in a two-step reaction: glutamate is first activated by ATP to form Glu-AMP and then transferred to the acceptor end of tRNA(Glu). The chain is Glutamate--tRNA ligase from Sorangium cellulosum (strain So ce56) (Polyangium cellulosum (strain So ce56)).